A 132-amino-acid polypeptide reads, in one-letter code: Flagellar assembly factor FliW (132 aa).

This sequence belongs to the FliW family. Interacts with translational regulator CsrA and flagellin(s).

It is found in the cytoplasm. In terms of biological role, acts as an anti-CsrA protein, binds CsrA and prevents it from repressing translation of its target genes, one of which is flagellin. Binds to flagellin and participates in the assembly of the flagellum. The protein is Flagellar assembly factor FliW of Borreliella afzelii (strain PKo) (Borrelia afzelii).